Consider the following 263-residue polypeptide: Protein M1627_2099 (263 aa).

Belongs to the CinA family.

In Saccharolobus islandicus (strain M.16.27) (Sulfolobus islandicus), this protein is Protein M1627_2099.